The following is a 166-amino-acid chain: Protein BioX (166 aa).

Transmembrane regions (helical) follow at residues 12–32 (ISLLACLIIVTGMFKIPTGIP), 33–53 (GSEFQLSAPIAVAIAAVFGFK), 55–75 (YFLAGIIASLILFLLGIHSIL), 87–107 (VGLIIVLLGTSIPVLVVAGPI), and 117–137 (AFTLGTPFLPLFVLAIPGMVI).

The protein localises to the cell membrane. Its function is as follows. Does not seem to be a permease of pimelate. Its role in biotin synthesis is not clear. This Lysinibacillus sphaericus (Bacillus sphaericus) protein is Protein BioX (bioX).